A 438-amino-acid polypeptide reads, in one-letter code: Forkhead box protein J1 (438 aa).

Residues lysine 123 to leucine 217 constitute a DNA-binding region (fork-head).

The protein belongs to the FOXJ1 family.

The protein localises to the nucleus. Functionally, key transcription factor required for motile ciliogenesis. Activates genes essential for motile cilia formation and function. This chain is Forkhead box protein J1, found in Xenopus tropicalis (Western clawed frog).